The primary structure comprises 110 residues: UPF0122 protein Sca_0859 (110 aa).

The protein belongs to the UPF0122 family.

Its function is as follows. Might take part in the signal recognition particle (SRP) pathway. This is inferred from the conservation of its genetic proximity to ftsY/ffh. May be a regulatory protein. This Staphylococcus carnosus (strain TM300) protein is UPF0122 protein Sca_0859.